We begin with the raw amino-acid sequence, 211 residues long: Thiamine-phosphate synthase (211 aa).

4-amino-2-methyl-5-(diphosphooxymethyl)pyrimidine is bound by residues 37–41 (QLRIK) and N69. 2 residues coordinate Mg(2+): D70 and D89. A 4-amino-2-methyl-5-(diphosphooxymethyl)pyrimidine-binding site is contributed by S108. A 2-[(2R,5Z)-2-carboxy-4-methylthiazol-5(2H)-ylidene]ethyl phosphate-binding site is contributed by 134–136 (TQT). Position 137 (K137) interacts with 4-amino-2-methyl-5-(diphosphooxymethyl)pyrimidine. Residues G166 and 186–187 (VS) contribute to the 2-[(2R,5Z)-2-carboxy-4-methylthiazol-5(2H)-ylidene]ethyl phosphate site.

It belongs to the thiamine-phosphate synthase family. The cofactor is Mg(2+).

The enzyme catalyses 2-[(2R,5Z)-2-carboxy-4-methylthiazol-5(2H)-ylidene]ethyl phosphate + 4-amino-2-methyl-5-(diphosphooxymethyl)pyrimidine + 2 H(+) = thiamine phosphate + CO2 + diphosphate. It catalyses the reaction 2-(2-carboxy-4-methylthiazol-5-yl)ethyl phosphate + 4-amino-2-methyl-5-(diphosphooxymethyl)pyrimidine + 2 H(+) = thiamine phosphate + CO2 + diphosphate. The catalysed reaction is 4-methyl-5-(2-phosphooxyethyl)-thiazole + 4-amino-2-methyl-5-(diphosphooxymethyl)pyrimidine + H(+) = thiamine phosphate + diphosphate. The protein operates within cofactor biosynthesis; thiamine diphosphate biosynthesis; thiamine phosphate from 4-amino-2-methyl-5-diphosphomethylpyrimidine and 4-methyl-5-(2-phosphoethyl)-thiazole: step 1/1. In terms of biological role, condenses 4-methyl-5-(beta-hydroxyethyl)thiazole monophosphate (THZ-P) and 2-methyl-4-amino-5-hydroxymethyl pyrimidine pyrophosphate (HMP-PP) to form thiamine monophosphate (TMP). This Escherichia coli O1:K1 / APEC protein is Thiamine-phosphate synthase.